Here is a 388-residue protein sequence, read N- to C-terminus: Succinate--CoA ligase [ADP-forming] subunit beta (388 aa).

Residues K46, G53–G55, E99, C102, and E107 contribute to the ATP site. 2 residues coordinate Mg(2+): N199 and D213. Residues N264 and G321 to V323 each bind substrate.

It belongs to the succinate/malate CoA ligase beta subunit family. In terms of assembly, heterotetramer of two alpha and two beta subunits. Requires Mg(2+) as cofactor.

The enzyme catalyses succinate + ATP + CoA = succinyl-CoA + ADP + phosphate. It catalyses the reaction GTP + succinate + CoA = succinyl-CoA + GDP + phosphate. It participates in carbohydrate metabolism; tricarboxylic acid cycle; succinate from succinyl-CoA (ligase route): step 1/1. Succinyl-CoA synthetase functions in the citric acid cycle (TCA), coupling the hydrolysis of succinyl-CoA to the synthesis of either ATP or GTP and thus represents the only step of substrate-level phosphorylation in the TCA. The beta subunit provides nucleotide specificity of the enzyme and binds the substrate succinate, while the binding sites for coenzyme A and phosphate are found in the alpha subunit. The polypeptide is Succinate--CoA ligase [ADP-forming] subunit beta (Actinobacillus pleuropneumoniae serotype 7 (strain AP76)).